The sequence spans 547 residues: Membrane protein insertase YidC (547 aa).

The next 6 helical transmembrane spans lie at Leu-6 to Tyr-26, Val-328 to Ile-348, Leu-351 to Phe-371, Leu-425 to Val-445, Leu-459 to Gln-479, and Pro-499 to Val-519.

Belongs to the OXA1/ALB3/YidC family. Type 1 subfamily. In terms of assembly, interacts with the Sec translocase complex via SecD. Specifically interacts with transmembrane segments of nascent integral membrane proteins during membrane integration.

The protein resides in the cell inner membrane. Its function is as follows. Required for the insertion and/or proper folding and/or complex formation of integral membrane proteins into the membrane. Involved in integration of membrane proteins that insert both dependently and independently of the Sec translocase complex, as well as at least some lipoproteins. Aids folding of multispanning membrane proteins. The protein is Membrane protein insertase YidC of Dechloromonas aromatica (strain RCB).